Reading from the N-terminus, the 445-residue chain is POU domain, class 5, transcription factor 1.2 (445 aa).

Composition is skewed to polar residues over residues 76 to 88 and 164 to 182; these read SANQLGISGQGNP and IFTSSPDKSGESGISSLDN. Disordered regions lie at residues 76–116 and 139–227; these read SANQ…PSLP and TTVV…GEME. A compositionally biased stretch (low complexity) spans 183–200; the sequence is SRCSSATSSSSGGTNVGT. Positions 218–292 constitute a POU-specific domain; that stretch reads EEAPNSGEME…LLRSWLHEVE (75 aa). Residues 312–371 constitute a DNA-binding region (homeobox); that stretch reads KRKHRTSIENNVKCTLENYFMQCSKPSAQEIAQIARELNMEKDVVRVWFCNRRQKGKRQV.

It belongs to the POU transcription factor family. Class-5 subfamily. As to quaternary structure, interacts with the transcription factors tcf7l1/tcf3 and vegt. In terms of tissue distribution, initially (stage 9) expressed in all regions of the embryo, becoming localized to the ventroposterior regions by early neurula stages. In adults, expressed at a low level in the brain.

It localises to the nucleus. Its function is as follows. Transcription factor that binds to the octamer motif (5'-ATTTGCAT-3'). Antagonizes the activity of nodal/activin signaling during gastrulation to suppress mesendoderm formation. This chain is POU domain, class 5, transcription factor 1.2 (pou5f1.2), found in Xenopus laevis (African clawed frog).